We begin with the raw amino-acid sequence, 432 residues long: Protein ABHD8 (432 aa).

Disordered stretches follow at residues 47-69 and 121-149; these read KHAG…QGDQ and PAGS…RPKR. Positions 52-61 are enriched in pro residues; it reads APAPTPPPPL. Residues 139-149 are compositionally biased toward basic residues; it reads GRRRRARRPKR. The region spanning 170-272 is the AB hydrolase-1 domain; the sequence is VLFFIHGVGG…HKVIMINGGG (103 aa). Residues serine 245, aspartate 363, and histidine 391 each act as charge relay system in the active site.

Belongs to the AB hydrolase superfamily. In terms of assembly, interacts with NLRP3 (via NACHT and LLR domains); this interaction is enhanced in the presence of NLRP3 inflammasome inducers, such as ATP, nigericin, silica, or alum. Interacts with ZDHHC12.

The protein resides in the cytoplasm. In terms of biological role, negatively regulates NLRP3-driven inflammation. Promotes NLRP3 degradation through the chaperone-mediated autophagy (CMA) pathway, hence attenuating inflammasome activation and IL1B secretion. Acts by recruiting palmitoyltransferase ZDHHC12 to NLRP3, facilitating NLRP3 palmitoylation and subsequent degradation. This Bos taurus (Bovine) protein is Protein ABHD8.